The chain runs to 325 residues: uncharacterized protein (325 aa).

A disordered region spans residues 1–75 (MSQPPEHPGN…PPPGYPTHLQ (75 aa)). Composition is skewed to pro residues over residues 24-39 (YPPPGYGAPPPPPGYG) and 50-70 (YNAPPPPPGYGPPPGPPPPGY). Helical transmembrane passes span 96–116 (AVTLVVPVLAYAVALAAVIGA), 153–173 (IVMFLGYIALFALVLYMHAGI), 205–225 (LLIVALTFIGGLLCVIPGLIF), and 273–293 (LVGELLCFVGMLIGIPVAALI).

It is found in the cell membrane. This is an uncharacterized protein from Mycobacterium tuberculosis (strain CDC 1551 / Oshkosh).